The primary structure comprises 2437 residues: Neurogenic locus notch homolog protein 1 (2437 aa).

An N-terminal signal peptide occupies residues Met-1–Ala-20. 4 consecutive EGF-like domains span residues Gln-21–Gln-57, Phe-58–Leu-98, Val-101–Gln-138, and Leu-139–Arg-175. Residues Gln-21–Tyr-1726 lie on the Extracellular side of the membrane. Cystine bridges form between Cys-25/Cys-35, Cys-29/Cys-45, Cys-47/Cys-56, Cys-62/Cys-73, Cys-67/Cys-86, Cys-88/Cys-97, Cys-105/Cys-116, Cys-110/Cys-126, Cys-128/Cys-137, Cys-143/Cys-154, Cys-148/Cys-163, Cys-165/Cys-174, Cys-181/Cys-194, Cys-188/Cys-203, Cys-205/Cys-214, Cys-221/Cys-232, Cys-226/Cys-242, Cys-244/Cys-253, Cys-260/Cys-271, Cys-265/Cys-280, Cys-282/Cys-291, Cys-298/Cys-311, Cys-305/Cys-320, Cys-322/Cys-331, Cys-338/Cys-349, Cys-343/Cys-358, Cys-360/Cys-369, Cys-375/Cys-386, Cys-380/Cys-397, Cys-399/Cys-408, Cys-415/Cys-428, Cys-422/Cys-437, Cys-439/Cys-448, Cys-455/Cys-466, Cys-460/Cys-475, Cys-477/Cys-486, Cys-493/Cys-503, Cys-498/Cys-512, Cys-514/Cys-523, Cys-530/Cys-541, Cys-535/Cys-550, Cys-552/Cys-561, Cys-568/Cys-578, Cys-573/Cys-587, Cys-589/Cys-598, Cys-605/Cys-616, Cys-610/Cys-625, Cys-627/Cys-636, Cys-643/Cys-653, Cys-648/Cys-662, Cys-664/Cys-673, Cys-680/Cys-691, Cys-685/Cys-700, Cys-702/Cys-711, Cys-718/Cys-728, Cys-723/Cys-737, Cys-739/Cys-748, Cys-755/Cys-766, Cys-760/Cys-775, Cys-777/Cys-786, Cys-793/Cys-804, Cys-798/Cys-813, Cys-815/Cys-824, Cys-831/Cys-842, Cys-836/Cys-853, Cys-855/Cys-864, Cys-871/Cys-882, Cys-876/Cys-891, Cys-893/Cys-902, Cys-909/Cys-920, Cys-914/Cys-929, Cys-931/Cys-940, Cys-947/Cys-958, Cys-952/Cys-967, Cys-969/Cys-978, Cys-985/Cys-996, Cys-990/Cys-1005, Cys-1007/Cys-1016, Cys-1023/Cys-1034, Cys-1028/Cys-1043, Cys-1045/Cys-1054, Cys-1061/Cys-1072, Cys-1066/Cys-1081, Cys-1083/Cys-1092, Cys-1099/Cys-1120, Cys-1114/Cys-1129, Cys-1131/Cys-1140, Cys-1147/Cys-1158, Cys-1152/Cys-1167, Cys-1169/Cys-1178, Cys-1185/Cys-1196, Cys-1190/Cys-1205, Cys-1207/Cys-1216, Cys-1223/Cys-1242, Cys-1236/Cys-1251, Cys-1253/Cys-1262, Cys-1269/Cys-1282, Cys-1274/Cys-1291, Cys-1293/Cys-1302, Cys-1309/Cys-1320, Cys-1314/Cys-1332, Cys-1334/Cys-1343, Cys-1350/Cys-1361, Cys-1355/Cys-1370, Cys-1372/Cys-1381, Cys-1389/Cys-1400, Cys-1394/Cys-1411, Cys-1413/Cys-1422, Cys-1447/Cys-1470, Cys-1452/Cys-1465, and Cys-1461/Cys-1477. Positions Asp-177–Gln-215 constitute an EGF-like 5; calcium-binding domain. An EGF-like 6 domain is found at Leu-217–Glu-254. O-linked (Fuc...) threonine; alternate glycosylation occurs at Thr-231. Thr-231 is a glycosylation site (O-linked (GalNAc...) threonine; alternate). One can recognise an EGF-like 7; calcium-binding domain in the interval Asn-256 to Thr-292. In terms of domain architecture, EGF-like 8; calcium-binding spans Asp-294–Ser-332. In terms of domain architecture, EGF-like 9; calcium-binding spans Asn-334–His-370. An EGF-like 10 domain is found at Leu-371–Asn-409. One can recognise an EGF-like 11; calcium-binding domain in the interval Asp-411–Glu-449. An EGF-like 12; calcium-binding domain is found at Asp-451 to Gln-487. Residues Asn-489–Gln-524 enclose the EGF-like 13; calcium-binding domain. An EGF-like 14; calcium-binding domain is found at Asp-526 to Glu-562. In terms of domain architecture, EGF-like 15; calcium-binding spans Asp-564–Glu-599. The EGF-like 16; calcium-binding domain maps to Asn-601 to Glu-637. The EGF-like 17; calcium-binding domain maps to Asn-639–Asn-674. Residues Asn-676–Leu-712 form the EGF-like 18; calcium-binding domain. One can recognise an EGF-like 19; calcium-binding domain in the interval Gln-714–Asp-749. The EGF-like 20; calcium-binding domain occupies Asn-751–Gln-787. Positions Asn-789–Glu-825 constitute an EGF-like 21; calcium-binding domain. Residues Val-827–Glu-865 enclose the EGF-like 22 domain. The region spanning Asp-867 to Glu-903 is the EGF-like 23; calcium-binding domain. Residues Asp-905–Ala-941 enclose the EGF-like 24; calcium-binding domain. Residues Asp-943–Glu-979 enclose the EGF-like 25; calcium-binding domain. A glycan (N-linked (GlcNAc...) asparagine) is linked at Asn-957. The 37-residue stretch at Asn-981–Gln-1017 folds into the EGF-like 26 domain. Residues Asp-1019–Gln-1055 form the EGF-like 27; calcium-binding domain. EGF-like domains lie at Leu-1057–Asp-1093 and Pro-1095–Gln-1141. The 37-residue stretch at Gln-1143–Ser-1179 folds into the EGF-like 30; calcium-binding domain. N-linked (GlcNAc...) asparagine glycosylation is present at Asn-1177. The EGF-like 31; calcium-binding domain occupies Glu-1181 to Glu-1217. The 45-residue stretch at Asp-1219–Glu-1263 folds into the EGF-like 32; calcium-binding domain. EGF-like domains lie at Asp-1265–Glu-1303, Val-1305–Glu-1344, Asp-1346–Gln-1382, and Met-1385–His-1423. Thr-1399 is a glycosylation site (O-linked (Fuc...) threonine; alternate). Residue Thr-1399 is glycosylated (O-linked (GalNAc...) threonine; alternate). 3 LNR repeats span residues Cys-1447 to Asn-1487, Cys-1488 to Gln-1525, and Cys-1526 to Lys-1566. Asn-1487 carries N-linked (GlcNAc...) asparagine glycosylation. 6 disulfides stabilise this stretch: Cys-1488–Cys-1512, Cys-1494–Cys-1507, Cys-1503–Cys-1519, Cys-1526–Cys-1552, Cys-1534–Cys-1547, and Cys-1543–Cys-1559. Asn-1585 is a glycosylation site (N-linked (GlcNAc...) asparagine). Residues Pro-1727–Val-1747 traverse the membrane as a helical segment. The Cytoplasmic portion of the chain corresponds to Ser-1748–Lys-2437. Positions Lys-1770–Ser-1790 are disordered. 6 ANK repeats span residues Asp-1867–Asn-1910, Thr-1915–Val-1944, Met-1948–Ala-1978, Asp-1982–Ala-2011, Ser-2015–Leu-2044, and Lys-2048–Ile-2077. 2 disordered regions span residues Ile-2127–Met-2174 and Arg-2356–Lys-2437. The segment covering Arg-2356–Gln-2387 has biased composition (polar residues). Residues Pro-2396–Ser-2411 show a composition bias toward low complexity. Residues Asn-2412–Met-2429 show a composition bias toward polar residues.

This sequence belongs to the NOTCH family. Post-translationally, synthesized in the endoplasmic reticulum as an inactive form which is proteolytically cleaved by a furin-like convertase in the trans-Golgi network before it reaches the plasma membrane to yield an active, ligand-accessible form. Cleavage results in a C-terminal fragment N(TM) and a N-terminal fragment N(EC). Following ligand binding, it is cleaved by adam17 to yield a membrane-associated intermediate fragment called notch extracellular truncation (NEXT). Following endocytosis, this fragment is then cleaved by presenilin dependent gamma-secretase to release a Notch-derived peptide containing the intracellular domain (NICD) from the membrane. O-glycosylated on the EGF-like domains. Contains both O-linked fucose and O-linked glucose. O-linked glycosylation by galnt11 is involved in determination of left/right symmetry: glycosylation promotes activation of notch1, possibly by promoting cleavage by adam17, modulating the balance between motile and immotile (sensory) cilia at the left-right organiser (LRO).

It is found in the cell membrane. Its subcellular location is the nucleus. Functions as a receptor for membrane-bound ligands Jagged-1 (JAG1), Jagged-2 (JAG2) and Delta-1 (DLL1) to regulate cell-fate determination. Upon ligand activation through the released notch intracellular domain (NICD) it forms a transcriptional activator complex with RBPJ/RBPSUH and activates genes of the enhancer of split locus. Affects the implementation of differentiation, proliferation and apoptotic programs. Involved in angiogenesis; negatively regulates endothelial cell proliferation and migration and angiogenic sprouting. Involved in the maturation of both CD4(+) and CD8(+) cells in the thymus. Important for follicular differentiation and possibly cell fate selection within the follicle. During cerebellar development, functions as a receptor for neuronal DNER and is involved in the differentiation of Bergmann glia. Represses neuronal and myogenic differentiation. May play an essential role in postimplantation development, probably in some aspect of cell specification and/or differentiation. May be involved in mesoderm development, somite formation and neurogenesis. Involved in determination of left/right symmetry by modulating the balance between motile and immotile (sensory) cilia at the left-right organiser (LRO). This Danio rerio (Zebrafish) protein is Neurogenic locus notch homolog protein 1 (notch1a).